A 1423-amino-acid chain; its full sequence is Protein phosphatase Slingshot homolog 2 (1423 aa).

Disordered regions lie at residues 1-37 and 51-70; these read MALVTVQRSPTPSTTSSPCASEADSGEEECRSQPRSI and LPRGNGSSTPRVSHRRNKHA. Residues 9–18 show a composition bias toward low complexity; sequence SPTPSTTSSP. A phosphoserine mark is found at S17, S25, and S36. The 56-residue stretch at 248–303 folds into the DEK-C domain; that stretch reads ERTERLIKTKLREIMMQKDLENITSKEIRTELEMQMVCNLREFKEFIDNEMIVILG. The region spanning 307–448 is the Tyrosine-protein phosphatase domain; it reads SPTQIFEHVF…LEEYQGILLA (142 aa). C392 (phosphocysteine intermediate) is an active-site residue. Residues S461, S487, S534, S631, and S633 each carry the phosphoserine modification. Disordered stretches follow at residues 698–725, 833–858, 878–950, 967–991, 1021–1042, 1074–1105, and 1207–1226; these read EMAADDQRSSSLSNTPHASEESSVDEDQ, HSSTADLEEEEPVEGEHDWGPGMHSG, RQEQ…HCER, APQDCLGSDSRSKKQEGDLKKQRAV, SLGHTEPGGEATPSKEGEKQGL, PQVLPLPHSSSECDRPADPNPMLSSPQDKGDC, and PEACRIPHSSSSENIRDLSH. Residues 884–904 show a composition bias toward polar residues; sequence HGTASAGPTLSNRKNSKNDSS. Composition is skewed to basic and acidic residues over residues 910–932, 976–987, and 1033–1042; these read PKWKSDETTPEHSFFLKEAEPSK, SRSKKQEGDLKK, and PSKEGEKQGL. S1217 carries the post-translational modification Phosphoserine. Residue T1422 is modified to Phosphothreonine.

Belongs to the protein-tyrosine phosphatase family. In terms of assembly, interacts with filamentous actin. Expressed in brain, heart, liver, skeletal muscle, testis and thymus. Also expressed at lower levels in kidney, small intestine and spleen. Within testicular seminiferous tubules expressed in germ cells and spermatocytes, where it has a cytoplasmic localization, and round spermatids, where it concentrates in the acrosomal region next to the nucleus.

The protein resides in the cytoplasm. The protein localises to the cytoskeleton. It is found in the cell junction. Its subcellular location is the focal adhesion. It localises to the cytoplasmic vesicle. The protein resides in the secretory vesicle. The protein localises to the acrosome. It carries out the reaction O-phospho-L-tyrosyl-[protein] + H2O = L-tyrosyl-[protein] + phosphate. It catalyses the reaction O-phospho-L-seryl-[protein] + H2O = L-seryl-[protein] + phosphate. The catalysed reaction is O-phospho-L-threonyl-[protein] + H2O = L-threonyl-[protein] + phosphate. In terms of biological role, protein phosphatase which regulates actin filament dynamics. Dephosphorylates and activates the actin binding/depolymerizing factor cofilin, which subsequently binds to actin filaments and stimulates their disassembly. Inhibitory phosphorylation of cofilin is mediated by LIMK1, which may also be dephosphorylated and inactivated by this protein. Required for spermatogenesis. Involved in acrosome biogenesis, probably by regulating cofilin-mediated actin cytoskeleton remodeling during proacrosomal vesicle fusion and/or Golgi to perinuclear vesicle trafficking. This Mus musculus (Mouse) protein is Protein phosphatase Slingshot homolog 2 (Ssh2).